Reading from the N-terminus, the 353-residue chain is tRNA-specific 2-thiouridylase MnmA 2 (353 aa).

ATP is bound at residue 6–13 (LLSGGVDS). The interaction with target base in tRNA stretch occupies residues 92 to 94 (NPD). Catalysis depends on C97, which acts as the Nucleophile. C97 and C192 are joined by a disulfide. G120 is an ATP binding site. The segment at 142-144 (KDQ) is interaction with tRNA. The active-site Cysteine persulfide intermediate is C192.

This sequence belongs to the MnmA/TRMU family.

It localises to the cytoplasm. The enzyme catalyses S-sulfanyl-L-cysteinyl-[protein] + uridine(34) in tRNA + AH2 + ATP = 2-thiouridine(34) in tRNA + L-cysteinyl-[protein] + A + AMP + diphosphate + H(+). Its function is as follows. Catalyzes the 2-thiolation of uridine at the wobble position (U34) of tRNA, leading to the formation of s(2)U34. The chain is tRNA-specific 2-thiouridylase MnmA 2 from Bacteroides fragilis (strain ATCC 25285 / DSM 2151 / CCUG 4856 / JCM 11019 / LMG 10263 / NCTC 9343 / Onslow / VPI 2553 / EN-2).